Here is a 587-residue protein sequence, read N- to C-terminus: FAD-dependent monooxygenase ankC (587 aa).

Residues 7–27 traverse the membrane as a helical segment; the sequence is AVDVLIIGAGPAGLIAAMWMA. Residues Y245 and D311 each coordinate FAD.

This sequence belongs to the PheA/TfdB FAD monooxygenase family. As to quaternary structure, homodimer. Requires FAD as cofactor.

Its subcellular location is the membrane. It catalyses the reaction cyclo(L-arginyl-L-dehydrotyrosyl) + AH2 + O2 = cyclo(L-arginyl-(Z)-dehydro-3,4-dihydroxytyrosyl) + A + H2O. Its pathway is secondary metabolite biosynthesis. Its function is as follows. FAD-dependent monooxygenase; part of the ank cluster that mediates the biosynthesis of NK13650 C, a highly modified cyclo-arginine-tyrosine dipeptide. AnkC uses as substrate the dehydro-cyclodipeptide intermediate generated by the monooxygase ankB and acts as a hydroxylase that installs the m-OH through a canonical flavin-dependent aromatic hydroxylation mechanism. Within the pathway, the cyclodipeptide synthase ankA acts as the scaffold-generating enzyme and is responsible for formation of the cyclo-Arg-Tyr diketopiperazine (cRY) from L-Arg and L-Tyr. The ankA product cRY is desaturated by the cytochrome P450 monooxygenase ankB to yield a dehydro-cyclodipeptide intermediate. The FAD-dependent monooxygenase ankC then installs the m-OH, ankD catalyzes the attachment of L-homoserine, and ankE ligates citrate to the ankD product to yield NK13650 B. The O-methyltransferase ankF is responsible for methylation of the C-17 phenol group of NK13650 B to produce NK13650 D. Amidation of NK13650 D with L-Asp by ankG then leads to the production of NK13650 C, whereas amidation of NK13650 B produces NK13650 A. In Aspergillus thermomutatus (Neosartorya pseudofischeri), this protein is FAD-dependent monooxygenase ankC.